A 221-amino-acid chain; its full sequence is MAASRPLSRFWEWGKNIVCVGRNYADHVREMQSAAPSEPVLFLKPSTAYAPEGSPVLVPAYTRNLHHELELAVVMGKRCRAVSEAAAMDYVAGYALCLDMTARDVQDECKKKGLPWTLAKSFTASCPVSAFVPKEKIPDPHNLKLWLKVNGELRQEGETSSMIFSIPYIISYVSKIMTLEEGDIILTGTPKGVGPVKENDEIQAGIHGVLSMKFKVERPEY.

A mitochondrion-targeting transit peptide spans 1-24 (MAASRPLSRFWEWGKNIVCVGRNY). Serine 37 is modified (phosphoserine). 3 residues coordinate Mg(2+): glutamate 68, glutamate 70, and aspartate 99. The residue at position 110 (lysine 110) is an N6-acetyllysine. An N6-succinyllysine modification is found at lysine 112.

Belongs to the FAH family. Homodimer. It depends on Mg(2+) as a cofactor. Mn(2+) is required as a cofactor.

Its subcellular location is the mitochondrion. The protein resides in the cytoplasm. The protein localises to the cytosol. It carries out the reaction oxaloacetate = enol-oxaloacetate. The enzyme catalyses oxaloacetate + H(+) = pyruvate + CO2. The catalysed reaction is a 3-acylpyruvate + H2O = a carboxylate + pyruvate + H(+). It catalyses the reaction acetylpyruvate + H2O = acetate + pyruvate + H(+). It carries out the reaction 3-fumarylpyruvate + H2O = fumarate + pyruvate + H(+). Its activity is regulated as follows. Oxaloacetate decarboxylation is competitively inhibited by oxalate. Tautomerase that converts enol-oxaloacetate, a strong inhibitor of succinate dehydrogenase, to the physiological keto form of oxaloacetate. It is thereby required to maximize aerobic respiration efficiency by preventing succinate dehydrogenase inhibition. Also acts as a weak oxaloacetate decarboxylase (ODx), catalyzing the decarboxylation of oxaloacetate (OAA) to pyruvate and CO(2), and as such is likely a regulatory enzyme in the TCA cycle. Also displays acylpyruvase activity, being able to hydrolyze acetylpyruvate and fumarylpyruvate in vitro. The polypeptide is Oxaloacetate tautomerase FAHD1, mitochondrial (Bos taurus (Bovine)).